A 377-amino-acid polypeptide reads, in one-letter code: 3-dehydroquinate synthase (377 aa).

Residues 115 to 119, 139 to 140, Lys152, and Lys162 contribute to the NAD(+) site; these read GVIGD and TS. 3 residues coordinate Zn(2+): Glu195, His257, and His276.

It belongs to the sugar phosphate cyclases superfamily. Dehydroquinate synthase family. Requires Co(2+) as cofactor. Zn(2+) serves as cofactor. NAD(+) is required as a cofactor.

The protein resides in the cytoplasm. The enzyme catalyses 7-phospho-2-dehydro-3-deoxy-D-arabino-heptonate = 3-dehydroquinate + phosphate. The protein operates within metabolic intermediate biosynthesis; chorismate biosynthesis; chorismate from D-erythrose 4-phosphate and phosphoenolpyruvate: step 2/7. Catalyzes the conversion of 3-deoxy-D-arabino-heptulosonate 7-phosphate (DAHP) to dehydroquinate (DHQ). The polypeptide is 3-dehydroquinate synthase (Rhizobium etli (strain ATCC 51251 / DSM 11541 / JCM 21823 / NBRC 15573 / CFN 42)).